We begin with the raw amino-acid sequence, 463 residues long: Chaperone SurA (463 aa).

Residues 1 to 25 (MTKPFSVLLASLLVITSTVSPLASA) form the signal peptide. PpiC domains are found at residues 174–276 (GSQY…KLVE) and 289–388 (LTEY…QRVG). 2 disordered regions span residues 329 to 348 (ATAK…GDLG) and 434 to 463 (GDRA…QPTR). Over residues 440–452 (DATAAPEPAAAPA) the composition is skewed to low complexity. The span at 453 to 463 (APTPPPAQPTR) shows a compositional bias: pro residues.

The protein resides in the periplasm. The enzyme catalyses [protein]-peptidylproline (omega=180) = [protein]-peptidylproline (omega=0). In terms of biological role, chaperone involved in the correct folding and assembly of outer membrane proteins. Recognizes specific patterns of aromatic residues and the orientation of their side chains, which are found more frequently in integral outer membrane proteins. May act in both early periplasmic and late outer membrane-associated steps of protein maturation. The sequence is that of Chaperone SurA from Xanthomonas campestris pv. campestris (strain 8004).